The primary structure comprises 256 residues: Small ribosomal subunit protein eS1 (256 aa).

Over residues 1–18 (MAVGKNKRLSKGKKGLKK) the composition is skewed to basic residues. The disordered stretch occupies residues 1-20 (MAVGKNKRLSKGKKGLKKKA). Residue alanine 2 is modified to N-acetylalanine; partial.

It belongs to the eukaryotic ribosomal protein eS1 family. As to quaternary structure, component of the small ribosomal subunit. Mature ribosomes consist of a small (40S) and a large (60S) subunit. The 40S subunit contains about 33 different proteins and 1 molecule of RNA (18S). The 60S subunit contains about 49 different proteins and 3 molecules of RNA (25S, 5.8S and 5S).

It localises to the cytoplasm. This Chaetomium globosum (strain ATCC 6205 / CBS 148.51 / DSM 1962 / NBRC 6347 / NRRL 1970) (Soil fungus) protein is Small ribosomal subunit protein eS1.